The following is a 508-amino-acid chain: Aldehyde dehydrogenase family 7 member B4 (508 aa).

NAD(+) is bound at residue 244-249 (GSSRVG). Catalysis depends on glutamate 266, which acts as the Proton acceptor. The Nucleophile role is filled by cysteine 300.

The protein belongs to the aldehyde dehydrogenase family. In terms of assembly, homotetramer.

The catalysed reaction is an aldehyde + NAD(+) + H2O = a carboxylate + NADH + 2 H(+). This Arabidopsis thaliana (Mouse-ear cress) protein is Aldehyde dehydrogenase family 7 member B4 (ALDH7B4).